A 249-amino-acid polypeptide reads, in one-letter code: Triosephosphate isomerase (249 aa).

Asn12 and Lys14 together coordinate substrate. Lys14 bears the N6-acetyllysine mark. A 3'-nitrotyrosine modification is found at Tyr68. At Ser80 the chain carries Phosphoserine. The active-site Electrophile is the His96. Ser106 carries the phosphoserine modification. Residue Lys142 forms a Glycyl lysine isopeptide (Lys-Gly) (interchain with G-Cter in SUMO1) linkage. N6-succinyllysine is present on Lys149. An N6-acetyllysine; alternate modification is found at Lys156. N6-succinyllysine; alternate is present on Lys156. At Ser159 the chain carries Phosphoserine. The active-site Proton acceptor is Glu166. Residue Thr173 is modified to Phosphothreonine. Lys194 is subject to N6-acetyllysine; alternate. Lys194 bears the N6-succinyllysine; alternate mark. Lys194 carries the N6-methyllysine; alternate modification. At Ser198 the chain carries Phosphoserine. A 3'-nitrotyrosine modification is found at Tyr209. Ser212 carries the phosphoserine modification. Thr214 carries the post-translational modification Phosphothreonine. The residue at position 223 (Ser223) is a Phosphoserine. At Lys238 the chain carries N6-acetyllysine.

The protein belongs to the triosephosphate isomerase family. In terms of assembly, homodimer.

The protein resides in the cytoplasm. It carries out the reaction dihydroxyacetone phosphate = methylglyoxal + phosphate. The enzyme catalyses D-glyceraldehyde 3-phosphate = dihydroxyacetone phosphate. It participates in carbohydrate degradation; glycolysis; D-glyceraldehyde 3-phosphate from glycerone phosphate: step 1/1. The protein operates within carbohydrate biosynthesis; gluconeogenesis. Triosephosphate isomerase is an extremely efficient metabolic enzyme that catalyzes the interconversion between dihydroxyacetone phosphate (DHAP) and D-glyceraldehyde-3-phosphate (G3P) in glycolysis and gluconeogenesis. In terms of biological role, it is also responsible for the non-negligible production of methylglyoxal a reactive cytotoxic side-product that modifies and can alter proteins, DNA and lipids. The polypeptide is Triosephosphate isomerase (TPI1) (Canis lupus familiaris (Dog)).